Here is a 511-residue protein sequence, read N- to C-terminus: MSGYVLLTVQLAAVLLLVTLWRAFRPNTRSNRVVSYIINVGNTPKIHQKNKADFHPRTNVEISPLVVPNLFDRWLNAHSDLPLSISRWRGKYQVPGGGERLPILTGADEIKAVFKDSGNHRKASNLNGGWVMGDLVGDGVGLISEGHWKRVHAVVSPPFTQKPTTYVPFVQSRISRHFSELYPEDEGGRTLRIKPAEDLKLLPFWVISDLLYGNLSPEMTEELLQITDLRTDVFRYAFKGGLSLFSISKIFYPDIRNKLHVFHTRWANFNRKAYQCALNRDDASACAIVTLYRAVEQGQITPTELMHTLDEALFANIDVTIGSFSWIPQFLAEDAALQSKLRKEISHARSDTAPESWVKYIGSNSTLLASCINESARLKPVTNYTYAQSMPTDRDVGGYRIPRGTFMVVDTNALNIWDDAWGSDKTSYRPQRFLEESRASFRYRFWRFGFGPRQCIAQALADTILKVLVAYTVENYELKSTGKSAANEEDAHKQGEAWFKVAEQGIILEAL.

The N-terminal stretch at 1-23 (MSGYVLLTVQLAAVLLLVTLWRA) is a signal peptide. 3 N-linked (GlcNAc...) asparagine glycosylation sites follow: Asn364, Asn373, and Asn383. Cys455 contacts heme.

The protein belongs to the cytochrome P450 family. Requires heme as cofactor.

It participates in alkaloid biosynthesis. Cytochrome P450 monooxygenase; part of the gene cluster that mediates the biosynthesis of the mycotoxins roquefortine C and meleagrin. The first stage is catalyzed by the dipeptide synthase roqA which condenses histidine and tryptophan to produce histidyltryptophanyldiketopiperazine (HTD). HTD is then converted to roquefortine C through two possible pathways. In the first pathway, prenyltransferase roqD transforms HTD to the intermediate roquefortine D, which is in turn converted to roquefortine C by the cytochrome P450 monooxygenase roqR. In the second pathway, HTD is first converted to the intermediate dehydrohistidyltryptophanyldi-ketopiperazine (DHTD) by roqR which is then prenylated by roqD to form roquefortine C. Roquefortine C can be further transformed to meleagrin via three more reactions including oxydation to glandicolin A by roqM, which is further reduced to glandicoline B by roqO. Finally, glandicoline B is converted to meleagrin by the glandicoline B O-methyltransferase roqN. More studies identified further branching and additional metabolites produced by the roquefortine/meleagrin cluster, including roquefortine F, roquefortine L, roquefortine M, roquefortine N and neoxaline. This chain is Cytochrome P450 monooxygenase roqR, found in Penicillium rubens (strain ATCC 28089 / DSM 1075 / NRRL 1951 / Wisconsin 54-1255) (Penicillium chrysogenum).